A 124-amino-acid chain; its full sequence is MNLIKQFEQEQIKKLTQGKSIPNFRPGDTVKVNLRIIEGANERIQAYQGVVIARANRSISSSFTVRKISHGQGIERKFMLYSPLISSIELIKQGVVRRAKLYYLRNLQGRKAKIREKIFSKDNQ.

Belongs to the bacterial ribosomal protein bL19 family.

This protein is located at the 30S-50S ribosomal subunit interface and may play a role in the structure and function of the aminoacyl-tRNA binding site. In Orientia tsutsugamushi (strain Ikeda) (Rickettsia tsutsugamushi), this protein is Large ribosomal subunit protein bL19.